The primary structure comprises 468 residues: V-type proton ATPase subunit H (468 aa).

The protein belongs to the V-ATPase H subunit family. In terms of assembly, V-ATPase is a heteromultimeric enzyme made up of two complexes: the ATP-hydrolytic V1 complex and the proton translocation V0 complex. The V1 complex consists of three catalytic AB heterodimers that form a heterohexamer, three peripheral stalks each consisting of EG heterodimers, one central rotor including subunits D and F, and the regulatory subunits C and H. The proton translocation complex V0 consists of the proton transport subunit a, a ring of proteolipid subunits c9c'', rotary subunit d, subunits e and f, and the accessory subunits VhaAC45 and ATP6AP2.

Its function is as follows. Subunit of the V1 complex of vacuolar(H+)-ATPase (V-ATPase), a multisubunit enzyme composed of a peripheral complex (V1) that hydrolyzes ATP and a membrane integral complex (V0) that translocates protons. V-ATPase is responsible for acidifying and maintaining the pH of intracellular compartments and in some cell types, is targeted to the plasma membrane, where it is responsible for acidifying the extracellular environment. Subunit H is essential for V-ATPase activity, but not for the assembly of the complex. The sequence is that of V-type proton ATPase subunit H (VhaSFD) from Drosophila melanogaster (Fruit fly).